A 437-amino-acid polypeptide reads, in one-letter code: Probable exopolygalacturonase C (437 aa).

An N-terminal signal peptide occupies residues Met1 to Gly21. Residues Asn25, Asn42, Asn82, Asn99, and Asn149 are each glycosylated (N-linked (GlcNAc...) asparagine). PbH1 repeat units lie at residues Gly215–Ser236 and Ser238–Ser259. Asp229 acts as the Proton donor in catalysis. His253 is an active-site residue. Asn269 carries an N-linked (GlcNAc...) asparagine glycan. PbH1 repeat units lie at residues Ile270 to Ser291 and Val299 to Gln320. 2 N-linked (GlcNAc...) asparagine glycosylation sites follow: Asn301 and Asn311. Cys386 and Cys392 are oxidised to a cystine. N-linked (GlcNAc...) asparagine glycosylation is found at Asn428 and Asn431.

Belongs to the glycosyl hydrolase 28 family.

Its subcellular location is the secreted. It catalyses the reaction [(1-&gt;4)-alpha-D-galacturonosyl](n) + H2O = alpha-D-galacturonate + [(1-&gt;4)-alpha-D-galacturonosyl](n-1). Its function is as follows. Specific in hydrolyzing the terminal glycosidic bond of polygalacturonic acid and oligogalacturonates. The sequence is that of Probable exopolygalacturonase C (pgxC) from Aspergillus flavus (strain ATCC 200026 / FGSC A1120 / IAM 13836 / NRRL 3357 / JCM 12722 / SRRC 167).